A 552-amino-acid polypeptide reads, in one-letter code: Polypyrimidine tract-binding protein 3 (552 aa).

N-acetylmethionine is present on M1. Position 17 is a phosphoserine (S17). Positions 32-43 (MNSSTPSTANGN) are enriched in polar residues. Residues 32 to 55 (MNSSTPSTANGNDSKKFKRDRPPC) are disordered. RRM domains are found at residues 59 to 143 (RVLH…NLPN), 182 to 258 (LRII…FSKL), and 358 to 432 (SVLL…LSKH). K65 participates in a covalent cross-link: Glycyl lysine isopeptide (Lys-Gly) (interchain with G-Cter in SUMO2). The residue at position 127 (Y127) is a Phosphotyrosine. T138 bears the Phosphothreonine mark. K216 participates in a covalent cross-link: Glycyl lysine isopeptide (Lys-Gly) (interchain with G-Cter in SUMO2). Position 423 is an N6-acetyllysine (K423). The segment at 435–455 (VQLPREGQEDQGLTKDFSNSP) is disordered. S454 bears the Phosphoserine mark. In terms of domain architecture, RRM 4 spans 475–550 (ATLHLSNIPP…HHLRVSFSKS (76 aa)).

In terms of assembly, interacts with THBS4 (via the acidic amphipathic C-terminus). As to expression, expressed in several hematopoietic cell lines examined.

In terms of biological role, RNA-binding protein that mediates pre-mRNA alternative splicing regulation. Plays a role in the regulation of cell proliferation, differentiation and migration. Positive regulator of EPO-dependent erythropoiesis. Participates in cell differentiation regulation by repressing tissue-specific exons. Promotes FAS exon 6 skipping. Binds RNA, preferentially to both poly(G) and poly(U). The protein is Polypyrimidine tract-binding protein 3 (PTBP3) of Homo sapiens (Human).